The sequence spans 267 residues: MFVETQEEVPEIREPLRRVGITNLRTVAKINWKGREYTFLPLIEVTIDVPAEKKGIHMSRLVESITEAMSEAVEEEVAKVHSSLEELGKSVIERLEGKHPHKRAEVWIKTHLIIPRTTPASKKTSYEPYDVEVGVIKNEDGSFEKVLRVRVIGNTACPHAMANNNGKTHIQRAIGELEIRAPFEEEIPLEEMIDVVESSFSHPTYTLLKTVDENAVVQGMFANPKFVEDVAREIFAKAKERFRGRIHVRVISNESIHKHDVIAETWS.

It belongs to the GTP cyclohydrolase IV family. Homodimer. The cofactor is Fe(2+).

The catalysed reaction is GTP + H2O = 7,8-dihydroneopterin 2',3'-cyclic phosphate + formate + diphosphate + H(+). It participates in cofactor biosynthesis; 5,6,7,8-tetrahydromethanopterin biosynthesis. Its function is as follows. Converts GTP to 7,8-dihydro-D-neopterin 2',3'-cyclic phosphate, the first intermediate in the biosynthesis of coenzyme methanopterin. The chain is GTP cyclohydrolase MptA from Thermococcus kodakarensis (strain ATCC BAA-918 / JCM 12380 / KOD1) (Pyrococcus kodakaraensis (strain KOD1)).